Reading from the N-terminus, the 149-residue chain is D-aminoacyl-tRNA deacylase (149 aa).

The Gly-cisPro motif, important for rejection of L-amino acids signature appears at 137–138 (GP).

Belongs to the DTD family. As to quaternary structure, homodimer.

The protein localises to the cytoplasm. The catalysed reaction is glycyl-tRNA(Ala) + H2O = tRNA(Ala) + glycine + H(+). The enzyme catalyses a D-aminoacyl-tRNA + H2O = a tRNA + a D-alpha-amino acid + H(+). Functionally, an aminoacyl-tRNA editing enzyme that deacylates mischarged D-aminoacyl-tRNAs. Also deacylates mischarged glycyl-tRNA(Ala), protecting cells against glycine mischarging by AlaRS. Acts via tRNA-based rather than protein-based catalysis; rejects L-amino acids rather than detecting D-amino acids in the active site. By recycling D-aminoacyl-tRNA to D-amino acids and free tRNA molecules, this enzyme counteracts the toxicity associated with the formation of D-aminoacyl-tRNA entities in vivo and helps enforce protein L-homochirality. In Pediococcus pentosaceus (strain ATCC 25745 / CCUG 21536 / LMG 10740 / 183-1w), this protein is D-aminoacyl-tRNA deacylase.